Consider the following 573-residue polypeptide: Kinesin light chain 1 (573 aa).

The stretch at 27–156 (KTKQVIQGLE…HLEFMNQLKK (130 aa)) forms a coiled coil. The segment covering 155–176 (KKYDDDISPSEDKDTDSTKEPL) has biased composition (basic and acidic residues). The tract at residues 155 to 203 (KKYDDDISPSEDKDTDSTKEPLDDLFPNDEDDPGQGIQQQHSSAAAAAQ) is disordered. S162 carries the post-translational modification Phosphoserine. Low complexity predominate over residues 188–203 (GQGIQQQHSSAAAAAQ). TPR repeat units follow at residues 213–246 (LRTLHNLVIQYASQGRYEVAVPLCKQALEDLEKT), 255–288 (ATMLNILALVYRDQNKYKDAANLLNDALAIREKT), 297–330 (AATLNNLAVLYGKRGKYKEAEPLCKRALEIREKV), 339–372 (AKQLNNLALLCQNQGKYEEVEYYYQRALEIYQTK), and 381–414 (AKTKNNLASCYLKQGKFKQAETLYKEILTRAHER). The residue at position 449 (Y449) is a Phosphotyrosine. S460 carries the phosphoserine modification. A TPR 6 repeat occupies 464–497 (TTTLKNLGALYRRQGKFEAAETLEEAAMRSRKQG). Phosphoserine; by AMPK occurs at positions 521 and 524. Position 547 is a phosphoserine (E547). The interval 553–573 (SGRASFCGKRQQQQWPGRRHR) is disordered.

This sequence belongs to the kinesin light chain family. Oligomeric complex composed of two heavy chains and two light chains. Interacts with SPAG9. Interacts with ATCAY; may link mitochondria to KLC1 and regulate mitochondria localization into neuron projections. Interacts (via TPR repeats) with TOR1A; the interaction associates TOR1A with the kinesin oligomeric complex. Interacts with BORCS5. Interacts with MAPK8IP3/JIP3 and NTRK2/TRKB; interaction with NTRK2/TRKB is mediated by MAPK8IP3/JIP3. Interacts with CLSTN1; phosphorylation at Ser-460 inhibits interaction with CLSTN1. As to quaternary structure, (Microbial infection) Interacts with adenovirus hexon-interlacing protein; this interaction leads to capsid disruption at the nuclear pore complex during virus entry into host cell. Post-translationally, phosphorylation at Ser-460 by ERK inhibits interaction with CLSTN1 and localization to cytoplasmic vesicles. As to expression, found in a variety of tissues. Mostly abundant in brain and spine.

It is found in the cell projection. The protein resides in the growth cone. Its subcellular location is the cytoplasmic vesicle. It localises to the cytoplasm. The protein localises to the cytoskeleton. In terms of biological role, kinesin is a microtubule-associated force-producing protein that may play a role in organelle transport. The light chain may function in coupling of cargo to the heavy chain or in the modulation of its ATPase activity. The chain is Kinesin light chain 1 (KLC1) from Homo sapiens (Human).